The following is a 466-amino-acid chain: Cysteine--tRNA ligase (466 aa).

Position 28 (Cys28) interacts with Zn(2+). Residues 30–40 (PTVYNYIHIGN) carry the 'HIGH' region motif. Zn(2+) contacts are provided by Cys208, His233, and Glu237. Residues 265-269 (KMSKS) carry the 'KMSKS' region motif. Position 268 (Lys268) interacts with ATP.

This sequence belongs to the class-I aminoacyl-tRNA synthetase family. As to quaternary structure, monomer. Zn(2+) serves as cofactor.

Its subcellular location is the cytoplasm. The enzyme catalyses tRNA(Cys) + L-cysteine + ATP = L-cysteinyl-tRNA(Cys) + AMP + diphosphate. The chain is Cysteine--tRNA ligase from Staphylococcus haemolyticus (strain JCSC1435).